The following is an 815-amino-acid chain: Lon protease 1 (815 aa).

The Lon N-terminal domain occupies 12–205 (VFVLALRDVV…HILKTIETEI (194 aa)). 358–365 (GPPGVGKT) contacts ATP. Positions 594-775 (TNQIGQVAGL…DEVFKIALES (182 aa)) constitute a Lon proteolytic domain. Catalysis depends on residues Ser681 and Lys724.

This sequence belongs to the peptidase S16 family. Homohexamer. Organized in a ring with a central cavity.

It is found in the cytoplasm. It catalyses the reaction Hydrolysis of proteins in presence of ATP.. Its function is as follows. ATP-dependent serine protease that mediates the selective degradation of mutant and abnormal proteins as well as certain short-lived regulatory proteins. Required for cellular homeostasis and for survival from DNA damage and developmental changes induced by stress. Degrades polypeptides processively to yield small peptide fragments that are 5 to 10 amino acids long. Binds to DNA in a double-stranded, site-specific manner. In Hydrogenovibrio crunogenus (strain DSM 25203 / XCL-2) (Thiomicrospira crunogena), this protein is Lon protease 1.